The chain runs to 402 residues: 4-hydroxy-3-methylbut-2-enyl diphosphate reductase (402 aa).

Cys-66 is a binding site for [4Fe-4S] cluster. Residue His-96 participates in (2E)-4-hydroxy-3-methylbut-2-enyl diphosphate binding. His-96 provides a ligand contact to dimethylallyl diphosphate. Position 96 (His-96) interacts with isopentenyl diphosphate. Cys-157 lines the [4Fe-4S] cluster pocket. A (2E)-4-hydroxy-3-methylbut-2-enyl diphosphate-binding site is contributed by His-185. His-185 contributes to the dimethylallyl diphosphate binding site. Position 185 (His-185) interacts with isopentenyl diphosphate. Glu-187 acts as the Proton donor in catalysis. Thr-250 serves as a coordination point for (2E)-4-hydroxy-3-methylbut-2-enyl diphosphate. Cys-288 is a [4Fe-4S] cluster binding site. 4 residues coordinate (2E)-4-hydroxy-3-methylbut-2-enyl diphosphate: Ser-317, Ser-318, Asn-319, and Ser-379. Dimethylallyl diphosphate is bound by residues Ser-317, Ser-318, Asn-319, and Ser-379. Ser-317, Ser-318, Asn-319, and Ser-379 together coordinate isopentenyl diphosphate.

This sequence belongs to the IspH family. [4Fe-4S] cluster serves as cofactor.

The enzyme catalyses isopentenyl diphosphate + 2 oxidized [2Fe-2S]-[ferredoxin] + H2O = (2E)-4-hydroxy-3-methylbut-2-enyl diphosphate + 2 reduced [2Fe-2S]-[ferredoxin] + 2 H(+). It carries out the reaction dimethylallyl diphosphate + 2 oxidized [2Fe-2S]-[ferredoxin] + H2O = (2E)-4-hydroxy-3-methylbut-2-enyl diphosphate + 2 reduced [2Fe-2S]-[ferredoxin] + 2 H(+). Its pathway is isoprenoid biosynthesis; dimethylallyl diphosphate biosynthesis; dimethylallyl diphosphate from (2E)-4-hydroxy-3-methylbutenyl diphosphate: step 1/1. It functions in the pathway isoprenoid biosynthesis; isopentenyl diphosphate biosynthesis via DXP pathway; isopentenyl diphosphate from 1-deoxy-D-xylulose 5-phosphate: step 6/6. In terms of biological role, catalyzes the conversion of 1-hydroxy-2-methyl-2-(E)-butenyl 4-diphosphate (HMBPP) into a mixture of isopentenyl diphosphate (IPP) and dimethylallyl diphosphate (DMAPP). Acts in the terminal step of the DOXP/MEP pathway for isoprenoid precursor biosynthesis. The chain is 4-hydroxy-3-methylbut-2-enyl diphosphate reductase from Trichormus variabilis (strain ATCC 29413 / PCC 7937) (Anabaena variabilis).